The following is a 396-amino-acid chain: Squamosa promoter-binding-like protein 10 (396 aa).

A disordered region spans residues Gln-74–Asp-104. Residues Leu-90–Asp-104 are compositionally biased toward polar residues. An SBP-type zinc finger spans residues Val-173 to Pro-250. The Zn(2+) site is built by Cys-176, Cys-181, Cys-198, His-201, Cys-217, Cys-220, His-224, and Cys-236. The Bipartite nuclear localization signal motif lies at Lys-233–Lys-249.

Zn(2+) is required as a cofactor.

It is found in the nucleus. In terms of biological role, trans-acting factor that binds specifically to the consensus nucleotide sequence 5'-TNCGTACAA-3'. This Arabidopsis thaliana (Mouse-ear cress) protein is Squamosa promoter-binding-like protein 10 (SPL10).